The chain runs to 259 residues: 5'-nucleotidase SurE (259 aa).

A divalent metal cation-binding residues include D8, D9, S39, and N95.

This sequence belongs to the SurE nucleotidase family. The cofactor is a divalent metal cation.

It localises to the cytoplasm. It carries out the reaction a ribonucleoside 5'-phosphate + H2O = a ribonucleoside + phosphate. Nucleotidase that shows phosphatase activity on nucleoside 5'-monophosphates. The chain is 5'-nucleotidase SurE from Pseudothermotoga lettingae (strain ATCC BAA-301 / DSM 14385 / NBRC 107922 / TMO) (Thermotoga lettingae).